We begin with the raw amino-acid sequence, 681 residues long: T-box brain protein 1 (681 aa).

Disordered regions lie at residues 43–83 (TDNL…RSKL) and 108–127 (SQSSQPQSAATAPSAMFPYP). A compositionally biased stretch (polar residues) spans 58–68 (GMTNQSDTDNF). Positions 108-122 (SQSSQPQSAATAPSA) are enriched in low complexity. The segment at residues 213-393 (LWLKFHRHQT…HNPFAKGFRD (181 aa)) is a DNA-binding region (T-box). Residue T408 is modified to Phosphothreonine. Position 410 is a phosphoserine (S410). Residues 447–483 (PGAGAGPGPGTDRSVPHTNGLLSPQQAEDPGAPSPQR) are disordered. A compositionally biased stretch (polar residues) spans 462-472 (PHTNGLLSPQQ). S594 carries the phosphoserine modification. The interval 597–655 (APAAEDAKPKDLSDSSWIETPSSIKSIDSSDSGIYEQAKRRRISPADTPVSESSSPLKS) is disordered. The segment covering 618–628 (SSIKSIDSSDS) has biased composition (low complexity). S640 carries the post-translational modification Phosphoserine.

As to quaternary structure, homodimer. Part of a complex containing CASK, TBR1 and TSPYL2; may modulate gene expression in response to neuronal synaptic activity. Forms homodimers. Interacts with FOXP2. Interacts with FOXP1. Interacts with BCL11A. Expressed in the developing and adult cortex. Expressed in the olfactory bulbs.

It is found in the nucleus. Transcriptional repressor involved in multiple aspects of cortical development, including neuronal migration, laminar and areal identity, and axonal projection. As transcriptional repressor of FEZF2, it blocks the formation of the corticospinal (CS) tract from layer 6 projection neurons, thereby restricting the origin of CS axons specifically to layer 5 neurons. The chain is T-box brain protein 1 (Tbr1) from Mus musculus (Mouse).